Here is a 309-residue protein sequence, read N- to C-terminus: Putative S-adenosyl-L-methionine-dependent methyltransferase Mvan_0104 (309 aa).

S-adenosyl-L-methionine contacts are provided by residues Asp-134 and 163 to 164; that span reads DL.

The protein belongs to the UPF0677 family.

In terms of biological role, exhibits S-adenosyl-L-methionine-dependent methyltransferase activity. The protein is Putative S-adenosyl-L-methionine-dependent methyltransferase Mvan_0104 of Mycolicibacterium vanbaalenii (strain DSM 7251 / JCM 13017 / BCRC 16820 / KCTC 9966 / NRRL B-24157 / PYR-1) (Mycobacterium vanbaalenii).